The chain runs to 278 residues: Acyl-[acyl-carrier-protein]--UDP-N-acetylglucosamine O-acyltransferase (278 aa).

It belongs to the transferase hexapeptide repeat family. LpxA subfamily. As to quaternary structure, homotrimer.

It localises to the cytoplasm. It catalyses the reaction a (3R)-hydroxyacyl-[ACP] + UDP-N-acetyl-alpha-D-glucosamine = a UDP-3-O-[(3R)-3-hydroxyacyl]-N-acetyl-alpha-D-glucosamine + holo-[ACP]. The protein operates within glycolipid biosynthesis; lipid IV(A) biosynthesis; lipid IV(A) from (3R)-3-hydroxytetradecanoyl-[acyl-carrier-protein] and UDP-N-acetyl-alpha-D-glucosamine: step 1/6. Its function is as follows. Involved in the biosynthesis of lipid A, a phosphorylated glycolipid that anchors the lipopolysaccharide to the outer membrane of the cell. The sequence is that of Acyl-[acyl-carrier-protein]--UDP-N-acetylglucosamine O-acyltransferase from Brucella abortus (strain S19).